The chain runs to 647 residues: Pumilio homolog 3 (647 aa).

The segment covering 1–10 (MEVKGKKKFT) has biased composition (basic residues). The segment at 1-123 (MEVKGKKKFT…KKKKELKQSR (123 aa)) is disordered. N6-acetyllysine is present on Lys33. Residues 59-68 (PGKKGVKQFK) are compositionally biased toward basic residues. Residues 102-123 (SGAKKPKWDDFKKKKKELKQSR) show a composition bias toward basic and acidic residues. A Nuclear localization signal motif is present at residues 105-117 (KKPKWDDFKKKKK). One can recognise a PUM-HD domain in the interval 142 to 509 (ESLRRKDCDK…VVLDKSACVL (368 aa)). 11 Pumilio repeats span residues 176 to 211 (HDSTRVIQCFIQYGNEEQRKQAFQELQGDLVELSKA), 212 to 247 (KYSRNIVKKFLMYGSKPQVAEIIRSFKGHVRKMLRH), 248 to 276 (SEASAIVEYAYNDKAILEQRNMLTEELYG), 288 to 324 (PTLDKVLELQPAKLELIMDEMKQILTPMAQKEAVIKH), 325 to 360 (SLVHKVFLDFFTYAPPKPRSELIEAIREAVVYLAHT), 361 to 396 (HDGARVAMHCLWHGTPKDRKVIVKTMKTYVEKVANG), 397 to 434 (QYSHLVLLAAFDCIDDTKLVKQIIISEIISSLPSIVND), 435 to 503 (KYGR…VVLD), 504 to 550 (KSAC…VAEH), 551 to 595 (PAGH…WASI), and 596 to 635 (NRGAIILSSLLQSCDQEVVNKVKGGLKPLIPTLEKNKSSS).

In terms of assembly, interacts with PARP1 (via catalytic domain). In terms of tissue distribution, in the adult eye, expressed primarily in retinal ganglion cells and, to a lesser extent, in the pigmented cells.

Its subcellular location is the nucleus. It localises to the nucleolus. The protein localises to the nucleoplasm. It is found in the chromosome. Functionally, inhibits the poly(ADP-ribosyl)ation activity of PARP1 and the degradation of PARP1 by CASP3 following genotoxic stress. Binds to double-stranded RNA or DNA without sequence specificity. Involved in development of the eye and of primordial germ cells. This is Pumilio homolog 3 from Mus musculus (Mouse).